The following is a 391-amino-acid chain: ATP phosphoribosyltransferase regulatory subunit (391 aa).

It belongs to the class-II aminoacyl-tRNA synthetase family. HisZ subfamily. As to quaternary structure, heteromultimer composed of HisG and HisZ subunits.

Its subcellular location is the cytoplasm. Its pathway is amino-acid biosynthesis; L-histidine biosynthesis; L-histidine from 5-phospho-alpha-D-ribose 1-diphosphate: step 1/9. Required for the first step of histidine biosynthesis. May allow the feedback regulation of ATP phosphoribosyltransferase activity by histidine. This Prochlorococcus marinus (strain NATL1A) protein is ATP phosphoribosyltransferase regulatory subunit.